The primary structure comprises 286 residues: Phosphonates import ATP-binding protein PhnC (286 aa).

The ABC transporter domain maps to 3–246; it reads FHLKQVTRRF…AVTEIYGTDS (244 aa). 35 to 42 provides a ligand contact to ATP; it reads GRSGAGKS.

It belongs to the ABC transporter superfamily. Phosphonates importer (TC 3.A.1.9.1) family. The complex is composed of two ATP-binding proteins (PhnC), two transmembrane proteins (PhnE) and a solute-binding protein (PhnD).

It is found in the cell inner membrane. The catalysed reaction is phosphonate(out) + ATP + H2O = phosphonate(in) + ADP + phosphate + H(+). In terms of biological role, part of the ABC transporter complex PhnCDE involved in phosphonates import. Responsible for energy coupling to the transport system. This Agrobacterium fabrum (strain C58 / ATCC 33970) (Agrobacterium tumefaciens (strain C58)) protein is Phosphonates import ATP-binding protein PhnC.